The primary structure comprises 287 residues: ATP synthase gamma chain (287 aa).

The protein belongs to the ATPase gamma chain family. F-type ATPases have 2 components, CF(1) - the catalytic core - and CF(0) - the membrane proton channel. CF(1) has five subunits: alpha(3), beta(3), gamma(1), delta(1), epsilon(1). CF(0) has three main subunits: a, b and c.

It is found in the cell inner membrane. Its function is as follows. Produces ATP from ADP in the presence of a proton gradient across the membrane. The gamma chain is believed to be important in regulating ATPase activity and the flow of protons through the CF(0) complex. This Marinobacter nauticus (strain ATCC 700491 / DSM 11845 / VT8) (Marinobacter aquaeolei) protein is ATP synthase gamma chain.